Here is a 377-residue protein sequence, read N- to C-terminus: Mitogen-activated protein kinase pmk-1 (377 aa).

The 285-residue stretch at 35–319 (YINLTPIGTG…AKEAMEHEYL (285 aa)) folds into the Protein kinase domain. ATP is bound by residues 41–49 (IGTGAYGTV) and lysine 64. Catalysis depends on aspartate 179, which acts as the Proton acceptor. Threonine 191 is modified (phosphothreonine). Positions 191–193 (TGY) match the TXY motif. Tyrosine 193 carries the post-translational modification Phosphotyrosine.

Belongs to the protein kinase superfamily. CMGC Ser/Thr protein kinase family. MAP kinase subfamily. In terms of assembly, interacts with transcription factor atf-7; perhaps in a manner dependent on dual specificity protein kinase sek-1. Mg(2+) is required as a cofactor. Requires Mn(2+) as cofactor. Post-translationally, dually phosphorylated on Thr-191 and Tyr-193, probably by sek-1, which activates the enzyme. Increased phosphorylation in response to the heavy metal arsenite. Increased phosphorylation in response to intestinal colonization by probiotic Lactobacillus fermentum strain JDFM216. In terms of tissue distribution, expressed in intestinal cells.

The protein resides in the nucleus. It catalyses the reaction L-seryl-[protein] + ATP = O-phospho-L-seryl-[protein] + ADP + H(+). The enzyme catalyses L-threonyl-[protein] + ATP = O-phospho-L-threonyl-[protein] + ADP + H(+). With respect to regulation, activated by phosphorylation on threonine and tyrosine. Inhibited by pyridinyl-imidazole related compounds. In terms of biological role, serine/threonine kinase which responds to activation by environmental stress and pro-inflammatory cytokines by phosphorylating downstream targets. As part of a MAP kinase signaling pathway, plays a role in modulation of lifespan and immunity. Phosphorylates skn-1 which probably regulates skn-1 nuclear translocation in response to oxidative stress. Probably by activating skn-1, involved in the up-regulation of gcs-1 and glutathione-S-transferase gst-4 expression upon bacteria infection. Up-regulates expression of gcs-1 in intestinal cells upon arsenite treatment. Functions downstream of the MAPKK sek-1 and the MAPKKK nsy-1 as the MAP kinase which regulates pathogen resistance and responses to oxidative stress. Required for expression of antimicrobial peptide nlp-29 in response to fungal infection or physical injury. Involved in resistance to the nematotoxic C.cinerea galectin (Cgl2). May play a redundant role with other MAP kinases in susceptibility to anoxia, downstream of tir-1/nsy-1. Phosphorylates transcription factor rnt-1 during oxidative stress which results in rnt-1 stabilization in the intestine. Phosphorylates transcription factor atf-7 during pathogen infection resulting in modulation of target genes. Probably downstream of nsy-1 and sek-1, involved in germline apoptosis induced by heavy metals, such as Cu(2+). Regulates the basal expression of immune effector genes including irg-4, irg-5, mul-1 and drd-50. The chain is Mitogen-activated protein kinase pmk-1 from Caenorhabditis elegans.